A 191-amino-acid polypeptide reads, in one-letter code: Thymidylate kinase (191 aa).

7-14 (GIDTAGKS) serves as a coordination point for ATP.

This sequence belongs to the thymidylate kinase family.

It catalyses the reaction dTMP + ATP = dTDP + ADP. In terms of biological role, phosphorylation of dTMP to form dTDP in both de novo and salvage pathways of dTTP synthesis. This is Thymidylate kinase from Sulfurimonas denitrificans (strain ATCC 33889 / DSM 1251) (Thiomicrospira denitrificans (strain ATCC 33889 / DSM 1251)).